The primary structure comprises 439 residues: tRNA modification GTPase MnmE (439 aa).

Residues arginine 23, glutamate 80, and lysine 120 each coordinate (6S)-5-formyl-5,6,7,8-tetrahydrofolate. Residues 217–365 (GLKIVIAGEP…LLTALQSHLP (149 aa)) form the TrmE-type G domain. Asparagine 227 lines the K(+) pocket. GTP-binding positions include 227 to 232 (NAGKSS), 246 to 252 (TEVAGTT), and 271 to 274 (DTAG). Serine 231 serves as a coordination point for Mg(2+). K(+)-binding residues include threonine 246, valine 248, and threonine 251. Threonine 252 is a binding site for Mg(2+). Lysine 439 serves as a coordination point for (6S)-5-formyl-5,6,7,8-tetrahydrofolate.

It belongs to the TRAFAC class TrmE-Era-EngA-EngB-Septin-like GTPase superfamily. TrmE GTPase family. In terms of assembly, homodimer. Heterotetramer of two MnmE and two MnmG subunits. The cofactor is K(+).

It localises to the cytoplasm. In terms of biological role, exhibits a very high intrinsic GTPase hydrolysis rate. Involved in the addition of a carboxymethylaminomethyl (cmnm) group at the wobble position (U34) of certain tRNAs, forming tRNA-cmnm(5)s(2)U34. In Rhizobium meliloti (strain 1021) (Ensifer meliloti), this protein is tRNA modification GTPase MnmE.